We begin with the raw amino-acid sequence, 53 residues long: Light-harvesting protein B800/850/890 beta-1 chain (53 aa).

At 1 to 19 (ADNMSLTGLSDEEAKEFHS) the chain is on the cytoplasmic side. Residues histidine 18 and histidine 36 each contribute to the a bacteriochlorophyll site. Residues 20-42 (IFMQSFLIFTAVAVVAHFLAWAW) traverse the membrane as a helical segment. At 43 to 53 (RPWIPGAEGYG) the chain is on the periplasmic side.

The protein belongs to the antenna complex beta subunit family. As to quaternary structure, the core complex is formed by different alpha and beta chains, binding bacteriochlorophyll molecules, and arranged most probably in tetrameric structures disposed around the reaction center. The non-pigmented gamma chains may constitute additional components.

It localises to the cell inner membrane. In terms of biological role, antenna complexes are light-harvesting systems, which transfer the excitation energy to the reaction centers. This chain is Light-harvesting protein B800/850/890 beta-1 chain, found in Halorhodospira halophila (strain DSM 244 / SL1) (Ectothiorhodospira halophila (strain DSM 244 / SL1)).